We begin with the raw amino-acid sequence, 295 residues long: Light-independent protochlorophyllide reductase iron-sulfur ATP-binding protein (295 aa).

ATP is bound by residues 39–44 (GIGKST) and Lys-68. Residue Ser-43 coordinates Mg(2+). [4Fe-4S] cluster contacts are provided by Cys-124 and Cys-158. An ATP-binding site is contributed by 209 to 210 (NR).

Belongs to the NifH/BchL/ChlL family. Homodimer. Protochlorophyllide reductase is composed of three subunits; ChlL, ChlN and ChlB. [4Fe-4S] cluster is required as a cofactor.

The enzyme catalyses chlorophyllide a + oxidized 2[4Fe-4S]-[ferredoxin] + 2 ADP + 2 phosphate = protochlorophyllide a + reduced 2[4Fe-4S]-[ferredoxin] + 2 ATP + 2 H2O. It participates in porphyrin-containing compound metabolism; chlorophyll biosynthesis (light-independent). Its function is as follows. Component of the dark-operative protochlorophyllide reductase (DPOR) that uses Mg-ATP and reduced ferredoxin to reduce ring D of protochlorophyllide (Pchlide) to form chlorophyllide a (Chlide). This reaction is light-independent. The L component serves as a unique electron donor to the NB-component of the complex, and binds Mg-ATP. This Prochlorococcus marinus (strain MIT 9215) protein is Light-independent protochlorophyllide reductase iron-sulfur ATP-binding protein.